Here is a 188-residue protein sequence, read N- to C-terminus: Nicotinamide-nucleotide adenylyltransferase (188 aa).

The segment at Ser-166–Asp-188 is disordered.

Belongs to the archaeal NMN adenylyltransferase family.

The protein localises to the cytoplasm. It catalyses the reaction beta-nicotinamide D-ribonucleotide + ATP + H(+) = diphosphate + NAD(+). Its pathway is cofactor biosynthesis; NAD(+) biosynthesis; NAD(+) from nicotinamide D-ribonucleotide: step 1/1. This Haloarcula marismortui (strain ATCC 43049 / DSM 3752 / JCM 8966 / VKM B-1809) (Halobacterium marismortui) protein is Nicotinamide-nucleotide adenylyltransferase.